Consider the following 325-residue polypeptide: Odorant receptor 131-2 (325 aa).

Topologically, residues 1 to 22 (MNSTSNSSLGNTFISKTLKEKS) are extracellular. 2 N-linked (GlcNAc...) asparagine glycosylation sites follow: Asn2 and Asn6. A helical transmembrane segment spans residues 23-43 (LTVQVLVGILLYVNGLMIFTF). Residues 44 to 54 (LKKETFRDTRY) lie on the Cytoplasmic side of the membrane. Residues 55 to 75 (ILFAQTLFVDSALMLFADLTL) traverse the membrane as a helical segment. Residues 76–91 (VGSAYELFIHIISCYI) lie on the Extracellular side of the membrane. The cysteines at positions 89 and 170 are disulfide-linked. Residues 92 to 112 (FCTVMALLSICSPVTLVAMCL) traverse the membrane as a helical segment. Residues 113 to 135 (ERYVAICLPLRHASISSPKNTIN) are Cytoplasmic-facing. The chain crosses the membrane as a helical span at residues 136–156 (GLLIIWGVSSVIPLFIFIVSF). Residues 157 to 190 (TYTPPNAMNSYVVCSNDVMFQVKWLAEMRALSQQ) lie on the Extracellular side of the membrane. The helical transmembrane segment at 191–211 (LLFVIMLCIVGSTYIKIMVAA) threads the bilayer. Topologically, residues 212-227 (KSASAENKKSTYKGLR) are cytoplasmic. The chain crosses the membrane as a helical span at residues 228–248 (TVILHGLQLILGMMQLITPYI). Residues 249 to 267 (DILTLKVDIMLFINVKFSN) are Extracellular-facing. Residues 268–285 (FMLFWIFPRCLSPLVYGL) form a helical membrane-spanning segment. Topologically, residues 286–325 (RDKKFYNALKYYAFCGIYVCKKHKIKDSKTIRGAVSIAIY) are cytoplasmic.

The protein belongs to the G-protein coupled receptor 1 family. In terms of assembly, homodimer. Monomer.

The protein localises to the cell membrane. The protein resides in the cytoplasm. In terms of biological role, probable olfactory receptor. The protein is Odorant receptor 131-2 of Danio rerio (Zebrafish).